The following is a 227-amino-acid chain: UMP-CMP kinase (227 aa).

ATP is bound at residue 35-40; it reads GAGKGT. The interval 55-85 is NMP; the sequence is SAGDLLRAEQHREGSEYGQLIQTCIKEGSIV. A ribonucleoside 5'-phosphate contacts are provided by residues arginine 61, 83 to 85, 122 to 125, and glutamine 129; these read SIV and GFPR. The segment at 159 to 169 is LID; the sequence is ERGKTSGREDD. An ATP-binding site is contributed by arginine 160. Residues arginine 166 and arginine 177 each contribute to the a ribonucleoside 5'-phosphate site. ATP is bound at residue valine 205.

The protein belongs to the adenylate kinase family. UMP-CMP kinase subfamily. As to quaternary structure, monomer. Requires Mg(2+) as cofactor.

The protein resides in the cytoplasm. Its subcellular location is the nucleus. It catalyses the reaction UMP + ATP = UDP + ADP. Functionally, catalyzes the phosphorylation of pyrimidine nucleoside monophosphates at the expense of ATP. Plays an important role in de novo pyrimidine nucleotide biosynthesis. Has preference for UMP and CMP as phosphate acceptors, but can also use AMP and dCMP to a lesser extent. May play a role during the formation of basidiospores in the gill tissue. The protein is UMP-CMP kinase (uck1) of Lentinula edodes (Shiitake mushroom).